The following is a 428-amino-acid chain: MKILIVGSGGREHALAWKAAQSPQVEQVFVAPGNGGTASEPGVENVAIAADDIAGLVEFARRESIGLTIVGPEAPLVLGLVDAFAEAGLPCFGPRQASAQLEGSKAFAKDFLHRHGIPTAAYGVFTELEPALAYLRQVGAPVVVKADGLAAGKGVILADDLATAEAAVHDMLGGGRFGRAGARVVIEEFLTGEEASFIAMVDGRHILPLASSQDHKARDDGDRGPNTGGMGAYSPAPIVTPEIHDRIMREVMEPTVAGLAAEGLPYLGFLYAGLMIGADGTPKVLEFNCRLGDPETQPLLMRLQSDLVELCLAALDGRLDQVTADWDARPALGVVMAAGGYPDDYETGHVISGLDAVPSSEAKVFQAGTRCEGDAILTNGGRVLCVTALGANVAEAQHLAYQAVDRIQWTDAFCRRDIGHRAIARERS.

One can recognise an ATP-grasp domain in the interval 109 to 316 (KDFLHRHGIP…LVELCLAALD (208 aa)). ATP is bound at residue 135-196 (LRQVGAPVVV…EEFLTGEEAS (62 aa)). Residues 211 to 235 (SSQDHKARDDGDRGPNTGGMGAYSP) form a disordered region. Basic and acidic residues predominate over residues 213–223 (QDHKARDDGDR). The Mg(2+) site is built by E286 and N288.

The protein belongs to the GARS family. Mg(2+) serves as cofactor. The cofactor is Mn(2+).

It carries out the reaction 5-phospho-beta-D-ribosylamine + glycine + ATP = N(1)-(5-phospho-beta-D-ribosyl)glycinamide + ADP + phosphate + H(+). The protein operates within purine metabolism; IMP biosynthesis via de novo pathway; N(1)-(5-phospho-D-ribosyl)glycinamide from 5-phospho-alpha-D-ribose 1-diphosphate: step 2/2. In Allochromatium vinosum (strain ATCC 17899 / DSM 180 / NBRC 103801 / NCIMB 10441 / D) (Chromatium vinosum), this protein is Phosphoribosylamine--glycine ligase (purD).